We begin with the raw amino-acid sequence, 510 residues long: Light-independent protochlorophyllide reductase subunit B (510 aa).

Asp-36 is a binding site for [4Fe-4S] cluster. Catalysis depends on Asp-297, which acts as the Proton donor. 432 to 433 (GM) is a binding site for substrate.

It belongs to the ChlB/BchB/BchZ family. Protochlorophyllide reductase is composed of three subunits; ChlL, ChlN and ChlB. Forms a heterotetramer of two ChlB and two ChlN subunits. It depends on [4Fe-4S] cluster as a cofactor.

It localises to the plastid. It is found in the chloroplast. It carries out the reaction chlorophyllide a + oxidized 2[4Fe-4S]-[ferredoxin] + 2 ADP + 2 phosphate = protochlorophyllide a + reduced 2[4Fe-4S]-[ferredoxin] + 2 ATP + 2 H2O. Its pathway is porphyrin-containing compound metabolism; chlorophyll biosynthesis (light-independent). Component of the dark-operative protochlorophyllide reductase (DPOR) that uses Mg-ATP and reduced ferredoxin to reduce ring D of protochlorophyllide (Pchlide) to form chlorophyllide a (Chlide). This reaction is light-independent. The NB-protein (ChlN-ChlB) is the catalytic component of the complex. In Pinus koraiensis (Korean pine), this protein is Light-independent protochlorophyllide reductase subunit B.